A 230-amino-acid chain; its full sequence is Proteasome subunit beta 2 (230 aa).

Basic and acidic residues predominate over residues 1 to 10 (MHDPENRLTD). Residues 1-29 (MHDPENRLTDAYEPEVGNLPNEDSGRDEE) form a disordered region. The propeptide at 1 to 35 (MHDPENRLTDAYEPEVGNLPNEDSGRDEENVVKTG) is removed in mature form; by autocatalysis. The active-site Nucleophile is Thr-36.

It belongs to the peptidase T1B family. In terms of assembly, the 20S proteasome core is composed of 14 alpha and 14 beta subunits that assemble into four stacked heptameric rings, resulting in a barrel-shaped structure. The two inner rings, each composed of seven catalytic beta subunits, are sandwiched by two outer rings, each composed of seven alpha subunits. The catalytic chamber with the active sites is on the inside of the barrel. Has a gated structure, the ends of the cylinder being occluded by the N-termini of the alpha-subunits. Is capped at one or both ends by the proteasome regulatory ATPase, PAN.

The protein localises to the cytoplasm. The catalysed reaction is Cleavage of peptide bonds with very broad specificity.. The formation of the proteasomal ATPase PAN-20S proteasome complex, via the docking of the C-termini of PAN into the intersubunit pockets in the alpha-rings, triggers opening of the gate for substrate entry. Interconversion between the open-gate and close-gate conformations leads to a dynamic regulation of the 20S proteasome proteolysis activity. Its function is as follows. Component of the proteasome core, a large protease complex with broad specificity involved in protein degradation. The polypeptide is Proteasome subunit beta 2 (Haloarcula marismortui (strain ATCC 43049 / DSM 3752 / JCM 8966 / VKM B-1809) (Halobacterium marismortui)).